A 28-amino-acid chain; its full sequence is Mu-theraphotoxin-Hsp1a (28 aa).

Cystine bridges form between Cys-2-Cys-16, Cys-9-Cys-21, and Cys-15-Cys-25. Asn-28 bears the Asparagine amide mark.

Belongs to the neurotoxin 30 (phrixotoxin) family. As to expression, expressed by the venom gland.

The protein localises to the secreted. Its function is as follows. Potent and selective inhibitor of Nav1.7/SCN9A sodium channels. Inhibits Nav1.7/SCN9A peak current (IC(50)=13 nM). In vivo, does not induce visible signs of toxicity when intravenously injected into mice. The sequence is that of Mu-theraphotoxin-Hsp1a from Homoeomma sp. (Peruvian tarantula).